The primary structure comprises 217 residues: Adenylate kinase (217 aa).

Position 10-15 (10-15 (GAGKGT)) interacts with ATP. The tract at residues 30 to 59 (STGDIFRSNVSQGTPLGVQAKRYMDAGELV) is NMP. Residues T31, R36, 57–59 (ELV), 85–88 (GFPR), and Q92 each bind AMP. The segment at 126 to 163 (GRRTCRGCGKVWHVEFDAPSQEGRCDRCGAELFQRDDD) is LID. R127 is a binding site for ATP. C130, C133, C150, and C153 together coordinate Zn(2+). Residues R160 and R171 each contribute to the AMP site. G199 serves as a coordination point for ATP.

It belongs to the adenylate kinase family. In terms of assembly, monomer.

The protein localises to the cytoplasm. The enzyme catalyses AMP + ATP = 2 ADP. Its pathway is purine metabolism; AMP biosynthesis via salvage pathway; AMP from ADP: step 1/1. Functionally, catalyzes the reversible transfer of the terminal phosphate group between ATP and AMP. Plays an important role in cellular energy homeostasis and in adenine nucleotide metabolism. The polypeptide is Adenylate kinase (Salinispora tropica (strain ATCC BAA-916 / DSM 44818 / JCM 13857 / NBRC 105044 / CNB-440)).